The following is a 343-amino-acid chain: Ribonucleoside-diphosphate reductase small subunit (343 aa).

Fe cation is bound by residues Asp101, Glu131, and His134. Tyr138 is an active-site residue. Residues 188–208 traverse the membrane as a helical segment; it reads ILMILIEGIFFSASFAAIAYL. Fe cation-binding residues include Glu194, Glu228, and His231.

The protein belongs to the ribonucleoside diphosphate reductase small chain family. Heterotetramer composed of a homodimer of the large subunit (R1) and a homodimer of the small subunit (R2). Larger multisubunit protein complex are also active, composed of (R1)n(R2)n. Fe cation serves as cofactor.

The protein resides in the host membrane. The catalysed reaction is a 2'-deoxyribonucleoside 5'-diphosphate + [thioredoxin]-disulfide + H2O = a ribonucleoside 5'-diphosphate + [thioredoxin]-dithiol. Functionally, ribonucleoside-diphosphate reductase holoenzyme provides the precursors necessary for viral DNA synthesis. Allows virus growth in non-dividing cells, as well as reactivation from latency in infected hosts. Catalyzes the biosynthesis of deoxyribonucleotides from the corresponding ribonucleotides. This chain is Ribonucleoside-diphosphate reductase small subunit, found in Gallid herpesvirus 2 (strain Chicken/Md5/ATCC VR-987) (GaHV-2).